The chain runs to 160 residues: Protein-export protein SecB (160 aa).

This sequence belongs to the SecB family. In terms of assembly, homotetramer, a dimer of dimers. One homotetramer interacts with 1 SecA dimer.

The protein resides in the cytoplasm. Its function is as follows. One of the proteins required for the normal export of preproteins out of the cell cytoplasm. It is a molecular chaperone that binds to a subset of precursor proteins, maintaining them in a translocation-competent state. It also specifically binds to its receptor SecA. The chain is Protein-export protein SecB from Burkholderia multivorans (strain ATCC 17616 / 249).